The following is a 194-amino-acid chain: Yellow fluorescent protein (194 aa).

Lumazine-binding repeat units lie at residues M1–H98 and I99–W194. K179–E183 lines the FMN pocket.

As to quaternary structure, homodimer. FMN serves as cofactor.

In terms of biological role, antenna protein that modulates the color of the bioluminescence emission of the luciferase. In the presence of YFP and only at temperatures below 20 degrees Celsius, luciferase exhibits a bimodal emission spectrum with a new peak at 545 nM (yellow), in addition to the one at 485 nM. The sequence is that of Yellow fluorescent protein (luxY) from Aliivibrio fischeri (Vibrio fischeri).